The chain runs to 40 residues: Snaclec LmrLEC-1 (40 aa).

Cys-2 and Cys-13 form a disulfide bridge.

The protein belongs to the snaclec family. Dimer (non-covalently linked) of heterodimers of subunits alpha and beta (disulfide-linked). Expressed by the venom gland.

The protein resides in the secreted. Functionally, interferes with one step of hemostasis (modulation of platelet aggregation, or coagulation cascade, for example). The chain is Snaclec LmrLEC-1 from Lachesis muta rhombeata (Bushmaster).